The primary structure comprises 65 residues: U2-theraphotoxin-Pc1a (65 aa).

The signal sequence occupies residues 1–20; the sequence is MGFKLVLFIAVLTLVGSSNA. A propeptide spanning residues 21 to 36 is cleaved from the precursor; the sequence is EISAKMDSRDSPMIQE. Disulfide bonds link cysteine 39–cysteine 56, cysteine 46–cysteine 59, and cysteine 55–cysteine 64.

The protein belongs to the neurotoxin 36 family. 02 subfamily. In terms of tissue distribution, expressed by the venom gland.

It localises to the secreted. Its function is as follows. Possesses strong antiplasmodial activity against the intra-erythrocyte stage of P.falciparum in vitro. IC(50) for inhibiting P.falciparum growth is 1.15 uM. Specifically interacts with infected erythrocytes. Does not lyse erythrocytes, is not cytotoxic to nucleated mammalian cells, and does not inhibit neuromuscular function. Has neither antibacterial nor antifungal activity. This is U2-theraphotoxin-Pc1a from Psalmopoeus cambridgei (Trinidad chevron tarantula).